Consider the following 185-residue polypeptide: Ribosome-recycling factor (185 aa).

Belongs to the RRF family.

It is found in the cytoplasm. In terms of biological role, responsible for the release of ribosomes from messenger RNA at the termination of protein biosynthesis. May increase the efficiency of translation by recycling ribosomes from one round of translation to another. The polypeptide is Ribosome-recycling factor (Neisseria gonorrhoeae (strain ATCC 700825 / FA 1090)).